Consider the following 146-residue polypeptide: Peptide methionine sulfoxide reductase MsrB (146 aa).

One can recognise a MsrB domain in the interval 2–125; that stretch reads LKKNKDELND…NSAAVQFIPY (124 aa). The active-site Nucleophile is the Cys114.

Belongs to the MsrB Met sulfoxide reductase family.

The catalysed reaction is L-methionyl-[protein] + [thioredoxin]-disulfide + H2O = L-methionyl-(R)-S-oxide-[protein] + [thioredoxin]-dithiol. This is Peptide methionine sulfoxide reductase MsrB from Staphylococcus carnosus (strain TM300).